Consider the following 119-residue polypeptide: Ribonuclease P protein component (119 aa).

Belongs to the RnpA family. Consists of a catalytic RNA component (M1 or rnpB) and a protein subunit.

It catalyses the reaction Endonucleolytic cleavage of RNA, removing 5'-extranucleotides from tRNA precursor.. Functionally, RNaseP catalyzes the removal of the 5'-leader sequence from pre-tRNA to produce the mature 5'-terminus. It can also cleave other RNA substrates such as 4.5S RNA. The protein component plays an auxiliary but essential role in vivo by binding to the 5'-leader sequence and broadening the substrate specificity of the ribozyme. The chain is Ribonuclease P protein component from Escherichia coli O157:H7.